The following is a 180-amino-acid chain: Crossover junction endodeoxyribonuclease RuvC (180 aa).

Catalysis depends on residues D13, E73, and D145. The Mg(2+) site is built by D13, E73, and D145.

Belongs to the RuvC family. In terms of assembly, homodimer which binds Holliday junction (HJ) DNA. The HJ becomes 2-fold symmetrical on binding to RuvC with unstacked arms; it has a different conformation from HJ DNA in complex with RuvA. In the full resolvosome a probable DNA-RuvA(4)-RuvB(12)-RuvC(2) complex forms which resolves the HJ. The cofactor is Mg(2+).

It is found in the cytoplasm. The enzyme catalyses Endonucleolytic cleavage at a junction such as a reciprocal single-stranded crossover between two homologous DNA duplexes (Holliday junction).. Its function is as follows. The RuvA-RuvB-RuvC complex processes Holliday junction (HJ) DNA during genetic recombination and DNA repair. Endonuclease that resolves HJ intermediates. Cleaves cruciform DNA by making single-stranded nicks across the HJ at symmetrical positions within the homologous arms, yielding a 5'-phosphate and a 3'-hydroxyl group; requires a central core of homology in the junction. The consensus cleavage sequence is 5'-(A/T)TT(C/G)-3'. Cleavage occurs on the 3'-side of the TT dinucleotide at the point of strand exchange. HJ branch migration catalyzed by RuvA-RuvB allows RuvC to scan DNA until it finds its consensus sequence, where it cleaves and resolves the cruciform DNA. The sequence is that of Crossover junction endodeoxyribonuclease RuvC from Magnetococcus marinus (strain ATCC BAA-1437 / JCM 17883 / MC-1).